The following is a 325-amino-acid chain: Myo-inositol dehydrogenase Hyg17 (325 aa).

Belongs to the Gfo/Idh/MocA family.

The enzyme catalyses myo-inositol + NAD(+) = myo-inosose-5 + NADH + H(+). It functions in the pathway antibiotic biosynthesis. In terms of biological role, dehydrogenase involved in the biosynthesis of the aminocyclitol moiety of hygromycin A, a broad-spectrum antibiotic. Catalyzes the NAD(+)-dependent oxidation of myo-inositol to myo-inosose-5 (neo-inosose). Shows reduced activity with scyllo-inositol, minimal activity with L-chiro-inositol and no activity with D-glucose, D-chiro-inositol, epi-inositol, muco-inositol and allo-inositol. Is specific for NAD(+) and cannot use NADP(+). The polypeptide is Myo-inositol dehydrogenase Hyg17 (Streptomyces leeuwenhoekii).